We begin with the raw amino-acid sequence, 194 residues long: Small ribosomal subunit protein uS4c (194 aa).

The S4 RNA-binding domain maps to 84–144; it reads MRLDTLLYRT…KEILKSLNDK (61 aa).

Belongs to the universal ribosomal protein uS4 family. Part of the 30S ribosomal subunit. Contacts protein S5. The interaction surface between S4 and S5 is involved in control of translational fidelity.

It is found in the plastid. The protein resides in the chloroplast. One of the primary rRNA binding proteins, it binds directly to 16S rRNA where it nucleates assembly of the body of the 30S subunit. Its function is as follows. With S5 and S12 plays an important role in translational accuracy. The chain is Small ribosomal subunit protein uS4c (rps4) from Bigelowiella natans (Pedinomonas minutissima).